The primary structure comprises 136 residues: Large ribosomal subunit protein uL16 (136 aa).

It belongs to the universal ribosomal protein uL16 family. Part of the 50S ribosomal subunit.

Functionally, binds 23S rRNA and is also seen to make contacts with the A and possibly P site tRNAs. The protein is Large ribosomal subunit protein uL16 of Rickettsia massiliae (strain Mtu5).